A 415-amino-acid chain; its full sequence is Histidine--tRNA ligase (415 aa).

Belongs to the class-II aminoacyl-tRNA synthetase family. Homodimer.

It localises to the cytoplasm. The catalysed reaction is tRNA(His) + L-histidine + ATP = L-histidyl-tRNA(His) + AMP + diphosphate + H(+). This is Histidine--tRNA ligase from Rickettsia akari (strain Hartford).